The primary structure comprises 513 residues: GMP synthase [glutamine-hydrolyzing] (513 aa).

The 190-residue stretch at 9–198 (LILVLDFGSQ…VRRVCNCTGE (190 aa)) folds into the Glutamine amidotransferase type-1 domain. Cys-86 serves as the catalytic Nucleophile. Catalysis depends on residues His-172 and Glu-174. The region spanning 199–388 (WTMENFIEIE…LGIPEHLVWR (190 aa)) is the GMPS ATP-PPase domain. An ATP-binding site is contributed by 226 to 232 (SGGVDSS).

Homodimer.

The catalysed reaction is XMP + L-glutamine + ATP + H2O = GMP + L-glutamate + AMP + diphosphate + 2 H(+). Its pathway is purine metabolism; GMP biosynthesis; GMP from XMP (L-Gln route): step 1/1. Its function is as follows. Catalyzes the synthesis of GMP from XMP. This Staphylococcus epidermidis (strain ATCC 35984 / DSM 28319 / BCRC 17069 / CCUG 31568 / BM 3577 / RP62A) protein is GMP synthase [glutamine-hydrolyzing].